Here is a 507-residue protein sequence, read N- to C-terminus: Cobyric acid synthase (507 aa).

The GATase cobBQ-type domain occupies 251-448; the sequence is DIDIAVVHLP…LHGLFDSDAF (198 aa). Catalysis depends on Cys332, which acts as the Nucleophile. His440 is an active-site residue.

Belongs to the CobB/CobQ family. CobQ subfamily.

The protein operates within cofactor biosynthesis; adenosylcobalamin biosynthesis. Its function is as follows. Catalyzes amidations at positions B, D, E, and G on adenosylcobyrinic A,C-diamide. NH(2) groups are provided by glutamine, and one molecule of ATP is hydrogenolyzed for each amidation. The polypeptide is Cobyric acid synthase (Klebsiella pneumoniae (strain 342)).